The chain runs to 528 residues: 3-ketoacyl-CoA synthase 2 (528 aa).

2 helical membrane-spanning segments follow: residues L36–L56 and F78–F98. One can recognise an FAE domain in the interval Y97–V388. Active-site residues include C241, H320, H407, H411, and N444.

The protein belongs to the thiolase-like superfamily. Chalcone/stilbene synthases family. Expressed in siliques, flowers and stems. In young seedlings, expressed in the central cylinder of primary roots, in emerging lateral roots and in their root cap, but not in aboveground tissues such as hypocotyls, cotyledons and leaves. Expressed in sepals in mature flowers and in the chalaza and micropyle region of developing seeds shortly prior to or just after the detachment from the funiculus. Expressed in roots, flowers, cauline leaves and siliques.

The protein localises to the membrane. It carries out the reaction a very-long-chain acyl-CoA + malonyl-CoA + H(+) = a very-long-chain 3-oxoacyl-CoA + CO2 + CoA. It functions in the pathway lipid metabolism; fatty acid biosynthesis. Its activity is regulated as follows. Inhibited by K3 herbicides such as allidochlor, anilofos, cafenstrole and flufenacet. Strongly inhibited by metazachlor. In terms of biological role, mediates the synthesis of VLCFAs from 22 to 26 carbons in length (e.g. C22, C24, C26). Involved in the elongation of C20 fatty acid suberin precursors. Functionally redundant with KCS20 in the two-carbon elongation of C22 fatty acids that is required for cuticular wax and root suberin biosynthesis. The polypeptide is 3-ketoacyl-CoA synthase 2 (Arabidopsis thaliana (Mouse-ear cress)).